The chain runs to 158 residues: Lipoprotein signal peptidase (158 aa).

The next 4 helical transmembrane spans lie at 7–27, 38–58, 67–87, and 95–115; these read LFWI…YWVV, ILPG…FSLF, WLSL…PVLE, and GLIL…GYVV. Active-site residues include Asp116 and Asp132. A helical membrane pass occupies residues 125–145; it reads FAVFNMADSFISIGIVCLLLA.

The protein belongs to the peptidase A8 family.

It localises to the cell inner membrane. The enzyme catalyses Release of signal peptides from bacterial membrane prolipoproteins. Hydrolyzes -Xaa-Yaa-Zaa-|-(S,diacylglyceryl)Cys-, in which Xaa is hydrophobic (preferably Leu), and Yaa (Ala or Ser) and Zaa (Gly or Ala) have small, neutral side chains.. It functions in the pathway protein modification; lipoprotein biosynthesis (signal peptide cleavage). This protein specifically catalyzes the removal of signal peptides from prolipoproteins. This chain is Lipoprotein signal peptidase, found in Trichormus variabilis (strain ATCC 29413 / PCC 7937) (Anabaena variabilis).